Here is a 325-residue protein sequence, read N- to C-terminus: Hydroxylase/desaturase poxK (325 aa).

The segment covering 1–12 (MTATATPVPTVA) has biased composition (low complexity). The disordered stretch occupies residues 1–25 (MTATATPVPTVASHAQDITLPPPPK).

This sequence belongs to the asaB hydroxylase/desaturase family.

Its pathway is secondary metabolite biosynthesis. Hydroxylase/desaturase; part of the gene cluster that mediates the biosynthesis of oxaleimides, cytotoxic compounds containing an unusual disubstituted succinimide moiety. The first step of the pathway is provided by the HR-PKS poxF that serves in a new mode of collaborative biosynthesis with the PKS-NRPS poxE, by providing the olefin containing amino acid substrate via the synthesis of an ACP-bound dec-4-enoate. The cytochrome P450 monooxygenase poxM-catalyzed oxidation at the alpha-position creates the enzyme-bound 2-hydroxydec-4-enoyl-ACP thioester, which may be prone to spontaneous hydrolysis to yield 2-hydroxydec-4-enoic acid due to increased electrophilicity of the carbonyl. 2-hydroxydec-4-enoic acid can then be further oxidized by poxM to yield the alpha-ketoacid 2-oxodec-4-enoicacid, which is reductively aminated by the aminotransferase poxL to yield (S,E)-2-aminodec-4-enoic acid. The Hybrid PKS-NRPS synthetase poxE then performs condensation between the octaketide product of its PKS modules and the amino group of (S,E)-2-aminodec-4-enoic acid which is activated and incorporated by the adenylation domain. The resulting aminoacyl product can be cyclized by the Diels-Alderase PoxQ and reductively released by the reductive (R) domain of poxE to yield an aldehyde intermediate. The released aldehyde is then substrate for a Knoevenagel condensation by the hydrolyase poxO followed by an oxidation at the 5-position of the pyrrolidone ring. The presence of the olefin from the amino acid building block allows for migration of the substituted allyl group to occur. This allylic transposition reaction takes place in a conjugate addition, semipinacol-like fashion to yield a succinimide intermediate. Iterative two-electron oxidations of the C7 methyl of the succinimide intermediate to the carboxylic acid can be catalyzed by one of two remaining cytochrome P450 monooxygenasess poxC or poxD to yield oxaleimide A. Subsequent oxidation yields the maleimide scaffold oxaleimide I. Both oxaleimide A and oxaleimide I can undergo oxidative modifications in the decalin ring to yield the series of products oxaleimides B to H. This Penicillium oxalicum protein is Hydroxylase/desaturase poxK.